The primary structure comprises 258 residues: uncharacterized protein (258 aa).

A signal peptide spans 1–23 (MVWCHYILLVLTFFLFTTFFTAA). At 24–64 (CPAIFTWLNSLFRLSNDSPHVVHTSIAEVGDIEDGRVDKDG) the chain is on the cytoplasmic side. Residues 65 to 85 (VLFVDLEFFLGCLPFFFFALV) form a helical membrane-spanning segment. At 86–123 (DQSSSSSVCKPLSPSDAKRSSNSLLRLSLVSSNDSDSS) the chain is on the extracellular side. An N-linked (GlcNAc...) asparagine glycan is attached at Asn-118. A helical transmembrane segment spans residues 124-144 (VSVSTFAFFFFFLFFLFFVFT). The Cytoplasmic portion of the chain corresponds to 145 to 230 (CTFSSELTSS…SSSISFRISS (86 aa)). Residues 231–251 (IFFLCSLVFMWFFNCFSDLNV) traverse the membrane as a helical segment. Over 252 to 258 (LLQIKHS) the chain is Extracellular.

The protein resides in the membrane. This is an uncharacterized protein from Saccharomyces cerevisiae (strain ATCC 204508 / S288c) (Baker's yeast).